We begin with the raw amino-acid sequence, 447 residues long: Multidrug efflux pump SdrM (447 aa).

Helical transmembrane passes span 6–26 (IITV…SSII), 42–62 (LISL…PIVG), 70–90 (IIYV…MCGL), 94–114 (FTML…LMSL), 134–154 (IVGS…GGIL), 161–181 (WLFY…IWTF), 194–214 (FDTK…FALL), 217–237 (QLLL…MCLF), 260–280 (VFIT…YIPV), 286–306 (LGLS…AWIT), 323–342 (IYLL…SFGI), 346–363 (VLIA…GYIY), 392–412 (LGAS…SGIF), and 418–438 (NVLS…VVFF).

Belongs to the major facilitator superfamily.

Its subcellular location is the cell membrane. In terms of biological role, energy-dependent drug efflux pump that increases resistance to antimicrobial agents such as norfloxacin, acriflavine and ethidium bromide. The protein is Multidrug efflux pump SdrM of Staphylococcus aureus (strain N315).